The sequence spans 270 residues: Vegetative storage protein 1 (270 aa).

Positions 1 to 17 (MKILSLSLLLLLAATVS) are cleaved as a signal peptide. Asn-115 and Asn-215 each carry an N-linked (GlcNAc...) asparagine glycan.

Belongs to the APS1/VSP family. In terms of tissue distribution, expressed in leaves and in gynoecia, especially in styles, the basal and distal ends of ovaries and in siliques.

Functionally, may function as somatic storage protein during early seedling development. The chain is Vegetative storage protein 1 (VSP1) from Arabidopsis thaliana (Mouse-ear cress).